The sequence spans 346 residues: Biotin synthase (346 aa).

Residues arginine 38–threonine 256 enclose the Radical SAM core domain. Residues cysteine 53, cysteine 57, and cysteine 60 each coordinate [4Fe-4S] cluster. [2Fe-2S] cluster-binding residues include cysteine 97, cysteine 128, cysteine 188, and arginine 260.

Belongs to the radical SAM superfamily. Biotin synthase family. As to quaternary structure, homodimer. Requires [4Fe-4S] cluster as cofactor. [2Fe-2S] cluster serves as cofactor.

It carries out the reaction (4R,5S)-dethiobiotin + (sulfur carrier)-SH + 2 reduced [2Fe-2S]-[ferredoxin] + 2 S-adenosyl-L-methionine = (sulfur carrier)-H + biotin + 2 5'-deoxyadenosine + 2 L-methionine + 2 oxidized [2Fe-2S]-[ferredoxin]. It participates in cofactor biosynthesis; biotin biosynthesis; biotin from 7,8-diaminononanoate: step 2/2. Catalyzes the conversion of dethiobiotin (DTB) to biotin by the insertion of a sulfur atom into dethiobiotin via a radical-based mechanism. This chain is Biotin synthase, found in Cronobacter sakazakii (strain ATCC BAA-894) (Enterobacter sakazakii).